The primary structure comprises 1060 residues: Desmoglein-1-beta (1060 aa).

Residues Met1–Ser23 form the signal peptide. The propeptide occupies Glu24–Arg49. Cadherin domains are found at residues Glu50–Phe157, Ser158–Leu269, Glu270–Ser389, and Arg386–Asp493. Topologically, residues Glu50–Pro567 are extracellular. Residue Asn110 is glycosylated (N-linked (GlcNAc...) (high mannose) asparagine). Asn180 carries N-linked (GlcNAc...) asparagine glycosylation. The disordered stretch occupies residues Pro490 to Glu560. The segment covering Ser492–Gly503 has biased composition (gly residues). Residues Asn510 to Gly519 are compositionally biased toward polar residues. Positions Gly525–Gly537 are enriched in gly residues. Residues Asp549–Glu560 are compositionally biased toward acidic residues. A helical transmembrane segment spans residues Ala568–Ile588. Over Cys589 to Lys1060 the chain is Cytoplasmic. Positions Pro792–Gln801 are enriched in low complexity. Positions Pro792–Thr811 are disordered. 5 Desmoglein repeat repeats span residues Ala835–Glu861, Ser862–Val891, Gly892–Ile921, Ala922–Ile949, and Gln950–Val978.

Interacts with DSC3; there is evidence to suggest that the interaction promotes cell-cell adhesion of keratinocytes. Expressed in epidermis.

The protein localises to the cell membrane. The protein resides in the cell junction. It is found in the desmosome. It localises to the cytoplasm. Its subcellular location is the nucleus. In terms of biological role, component of intercellular desmosome junctions. Involved in the interaction of plaque proteins and intermediate filaments mediating cell-cell adhesion. The protein is Desmoglein-1-beta (Dsg1b) of Mus musculus (Mouse).